Reading from the N-terminus, the 371-residue chain is DNA replication and repair protein RecF (371 aa).

30–37 (GPNAQGKT) lines the ATP pocket.

It belongs to the RecF family.

The protein resides in the cytoplasm. Its function is as follows. The RecF protein is involved in DNA metabolism; it is required for DNA replication and normal SOS inducibility. RecF binds preferentially to single-stranded, linear DNA. It also seems to bind ATP. This Desulforamulus reducens (strain ATCC BAA-1160 / DSM 100696 / MI-1) (Desulfotomaculum reducens) protein is DNA replication and repair protein RecF.